The chain runs to 227 residues: Transmembrane emp24 domain-containing protein 4 (227 aa).

An N-terminal signal peptide occupies residues 1 to 29 (MAGVGVGPLQGMVRFGLLVLTVCAACARG). At 30–194 (LYFHIGETEK…RLTSESTNQR (165 aa)) the chain is on the lumenal side. In terms of domain architecture, GOLD spans 39 to 137 (KRCFIEEIPD…KLRVHLDIQV (99 aa)). An N-linked (GlcNAc...) asparagine glycan is attached at asparagine 117. A coiled-coil region spans residues 147 to 176 (IAAKDKLTELQLRARQLLDQVEQIQKEQDY). A helical membrane pass occupies residues 195–212 (VLWWSIAQTVILILTGIW). The Cytoplasmic portion of the chain corresponds to 213-227 (QMRHLKSFFEAKKLV). The COPII vesicle coat-binding motif lies at 220–221 (FF). The short motif at 220 to 227 (FFEAKKLV) is the COPI vesicle coat-binding element.

Belongs to the EMP24/GP25L family.

It localises to the endoplasmic reticulum membrane. In terms of biological role, involved in vesicular protein trafficking, mainly in the early secretory pathway. Involved in the maintenance of the Golgi apparatus. Appears to play a role in the biosynthesis of secreted cargo including processing. Involved in endoplasmic reticulum stress response. May play a role in the regulation of heat-shock response and apoptosis. This is Transmembrane emp24 domain-containing protein 4 (Tmed4) from Mus musculus (Mouse).